A 106-amino-acid polypeptide reads, in one-letter code: Urease subunit beta (106 aa).

The protein belongs to the urease beta subunit family. As to quaternary structure, heterotrimer of UreA (gamma), UreB (beta) and UreC (alpha) subunits. Three heterotrimers associate to form the active enzyme.

The protein resides in the cytoplasm. It carries out the reaction urea + 2 H2O + H(+) = hydrogencarbonate + 2 NH4(+). Its pathway is nitrogen metabolism; urea degradation; CO(2) and NH(3) from urea (urease route): step 1/1. This Synechococcus sp. (strain CC9311) protein is Urease subunit beta.